The chain runs to 213 residues: Flagellin A1 (213 aa).

Residues 1–10 (MFENINEDRG) constitute a propeptide that is removed on maturation. Asparagine 70, asparagine 115, and asparagine 172 each carry an N-linked (GlcNAc...) asparagine glycan.

The protein belongs to the archaeal flagellin family. In terms of processing, glycosylated by a pentasaccharide similar to the S-layer glycoprotein, probably comprising a hexose, 2 hexuronic acids, a methyl ester of a hexuronic acid and mannose. Glycosylation is required for biosynthesis of stable flagella.

It localises to the archaeal flagellum. Its function is as follows. Major flagellin required for motility. Not involved in PibD-dependent surface adhesion. Much more abundant in cells compared to FlgA2. The protein is Flagellin A1 (flgA1) of Haloferax volcanii (strain ATCC 29605 / DSM 3757 / JCM 8879 / NBRC 14742 / NCIMB 2012 / VKM B-1768 / DS2) (Halobacterium volcanii).